A 142-amino-acid polypeptide reads, in one-letter code: Interleukin-3 (142 aa).

Positions 1 to 18 are cleaved as a signal peptide; that stretch reads MSHLPILLLLLLVSPGLQ. The N-linked (GlcNAc...) asparagine glycan is linked to asparagine 33. Cysteine 34 and cysteine 102 are joined by a disulfide.

Belongs to the IL-3 family. Monomer. In terms of tissue distribution, activated T-cells, mast cells, natural killer cells.

The protein resides in the secreted. Its function is as follows. Granulocyte/macrophage colony-stimulating factors are cytokines that act in hematopoiesis by controlling the production, differentiation, and function of 2 related white cell populations of the blood, the granulocytes and the monocytes-macrophages. In terms of biological role, this CSF induces granulocytes, macrophages, mast cells, stem cells, erythroid cells, eosinophils and megakaryocytes. The sequence is that of Interleukin-3 (IL3) from Callithrix jacchus (White-tufted-ear marmoset).